The sequence spans 331 residues: Acyl-CoA desaturase 1 (331 aa).

The Cytoplasmic segment spans residues 1–46; the sequence is MTEVDDGCGGRLRGSVLLEDECDLKQECETPTHSLVQGRDPPVVVV. A helical membrane pass occupies residues 47–67; sequence WRNVVLMSVLHTAAVYGLVLL. Asn49 is a binding site for substrate. At 68-71 the chain is on the lumenal side; that stretch reads PSAS. Residues 72 to 90 form a helical membrane-spanning segment; that stretch reads AYTLLAFCFVSSALGITAG. The Cytoplasmic segment spans residues 91-189; that stretch reads AHRLWSHRSY…DRVVMFQRRF (99 aa). His92 and His97 together coordinate Fe cation. The Histidine box-1 motif lies at 92–97; it reads HRLWSH. Substrate-binding residues include Asn120, Arg127, and Asp128. Fe cation-binding residues include His129, His132, and His133. A Histidine box-2 motif is present at residues 129-133; sequence HRVHH. Lys161 contacts substrate. The helical transmembrane segment at 190–209 threads the bilayer; the sequence is YKHSVVVMCFLIPAMLPWFL. The Lumenal segment spans residues 210–213; that stretch reads WAES. A helical transmembrane segment spans residues 214–235; it reads LWVGYFVPVLLRYALVLNATWL. Position 234 (Trp234) interacts with substrate. Residues 236-331 are Cytoplasmic-facing; the sequence is VNSAAHMWGN…RTGDGSHRSG (96 aa). Residues His241, His270, His273, and His274 each coordinate Fe cation. A Histidine box-3 motif is present at residues 270–274; the sequence is HNYHH.

The protein belongs to the fatty acid desaturase type 1 family. Requires Fe(2+) as cofactor. In terms of tissue distribution, expression is highest in liver, followed by brain and intestine, and lowest in spleen. Also expressed in heart, gill and muscle.

It localises to the endoplasmic reticulum membrane. It catalyses the reaction octadecanoyl-CoA + 2 Fe(II)-[cytochrome b5] + O2 + 2 H(+) = (9Z)-octadecenoyl-CoA + 2 Fe(III)-[cytochrome b5] + 2 H2O. Its function is as follows. Stearoyl-CoA desaturase that utilizes O(2) and electrons from reduced cytochrome b5 to introduce the first double bond into saturated fatty acyl-CoA substrates. Catalyzes the insertion of a cis double bond at the delta-9 position into fatty acyl-CoA substrates including palmitoyl-CoA and stearoyl-CoA. Contributes to the biosynthesis of membrane phospholipids, cholesterol esters and triglycerides. This chain is Acyl-CoA desaturase 1, found in Tachysurus fulvidraco (Yellow catfish).